A 180-amino-acid polypeptide reads, in one-letter code: Shikimate kinase (180 aa).

Residue 14–19 coordinates ATP; sequence GAGKSC. S18 lines the Mg(2+) pocket. Positions 36, 60, and 82 each coordinate substrate. R120 contacts ATP. Substrate is bound at residue R139.

It belongs to the shikimate kinase family. As to quaternary structure, monomer. Mg(2+) is required as a cofactor.

It is found in the cytoplasm. The enzyme catalyses shikimate + ATP = 3-phosphoshikimate + ADP + H(+). It participates in metabolic intermediate biosynthesis; chorismate biosynthesis; chorismate from D-erythrose 4-phosphate and phosphoenolpyruvate: step 5/7. Functionally, catalyzes the specific phosphorylation of the 3-hydroxyl group of shikimic acid using ATP as a cosubstrate. The sequence is that of Shikimate kinase from Xanthomonas euvesicatoria pv. vesicatoria (strain 85-10) (Xanthomonas campestris pv. vesicatoria).